The primary structure comprises 822 residues: Penicillin-binding protein 1A (822 aa).

The Cytoplasmic segment spans residues 1-5; the sequence is MRLLK. The chain crosses the membrane as a helical; Signal-anchor for type II membrane protein span at residues 6-26; the sequence is FLWWTCVTLICGVLLSFSGAY. Residues 27-822 lie on the Periplasmic side of the membrane; sequence LYLSPSLPSV…DDEGAPIDLF (796 aa). The tract at residues 48 to 216 is transglycosylase; the sequence is LKVYSEDGKL…SRYNPLVNPT (169 aa). The active-site Proton donor; for transglycosylase activity is the Glu-86. Residues 403 to 744 form a transpeptidase region; it reads IRVQRQEDGT…GTVALPIWIR (342 aa). Catalysis depends on Ser-461, which acts as the Acyl-ester intermediate; for transpeptidase activity. 2 disordered regions span residues 614–654 and 790–822; these read AADA…FEPT and KNED…IDLF. Over residues 812 to 822 the composition is skewed to acidic residues; sequence PDDEGAPIDLF.

The protein in the N-terminal section; belongs to the glycosyltransferase 51 family. In the C-terminal section; belongs to the transpeptidase family.

Its subcellular location is the cell inner membrane. The enzyme catalyses [GlcNAc-(1-&gt;4)-Mur2Ac(oyl-L-Ala-gamma-D-Glu-L-Lys-D-Ala-D-Ala)](n)-di-trans,octa-cis-undecaprenyl diphosphate + beta-D-GlcNAc-(1-&gt;4)-Mur2Ac(oyl-L-Ala-gamma-D-Glu-L-Lys-D-Ala-D-Ala)-di-trans,octa-cis-undecaprenyl diphosphate = [GlcNAc-(1-&gt;4)-Mur2Ac(oyl-L-Ala-gamma-D-Glu-L-Lys-D-Ala-D-Ala)](n+1)-di-trans,octa-cis-undecaprenyl diphosphate + di-trans,octa-cis-undecaprenyl diphosphate + H(+). It carries out the reaction Preferential cleavage: (Ac)2-L-Lys-D-Ala-|-D-Ala. Also transpeptidation of peptidyl-alanyl moieties that are N-acyl substituents of D-alanine.. It participates in cell wall biogenesis; peptidoglycan biosynthesis. Functionally, cell wall formation. Synthesis of cross-linked peptidoglycan from the lipid intermediates. The enzyme has a penicillin-insensitive transglycosylase N-terminal domain (formation of linear glycan strands) and a penicillin-sensitive transpeptidase C-terminal domain (cross-linking of the peptide subunits). The polypeptide is Penicillin-binding protein 1A (mrcA) (Pseudomonas aeruginosa (strain ATCC 15692 / DSM 22644 / CIP 104116 / JCM 14847 / LMG 12228 / 1C / PRS 101 / PAO1)).